The chain runs to 206 residues: MILKLNGYGYSSNSYLIIGKKNILIDPGTSGTFNILMEELERNGIKDIDLIINTHCHFDHTSADYLIEEYFNCPTIIEDKEVKHLKNGDEVTVSSLFGAKLNPPKEIIPLSEIEEELKSYGLEIIRTPGHTYGSISIIYENSLITGDTIFAYGVGRWDLPTGDVIQLRNSINLLERIANERNIDKLYPGHGEIGDRMAFSYAKLFI.

Zn(2+) contacts are provided by His55, His57, Asp59, His60, His130, Asp147, and His190.

Belongs to the metallo-beta-lactamase superfamily. The cofactor is Zn(2+).

The protein is Probable metallo-hydrolase MJ0888 of Methanocaldococcus jannaschii (strain ATCC 43067 / DSM 2661 / JAL-1 / JCM 10045 / NBRC 100440) (Methanococcus jannaschii).